We begin with the raw amino-acid sequence, 714 residues long: Cell wall protein IFF7 (714 aa).

The signal sequence occupies residues 1–19; the sequence is MLFTLSILSTLLFSTSISA. N-linked (GlcNAc...) asparagine glycosylation occurs at asparagine 200. Residues 320–330 show a composition bias toward polar residues; it reads GPVPSQKSLPS. Disordered regions lie at residues 320–633 and 660–692; these read GPVP…AADS and PIANESSSPSSSSSSSSSSSGTPGEVIPNANGS. A compositionally biased stretch (low complexity) spans 346–504; that stretch reads GSSSSSSVVS…SSTPLSGDSS (159 aa). N-linked (GlcNAc...) asparagine glycosylation is found at asparagine 390, asparagine 394, asparagine 399, asparagine 421, and asparagine 473. Positions 505 to 519 are enriched in polar residues; it reads QVSSLTTGTSPDTIA. The span at 520–544 shows a compositional bias: low complexity; the sequence is SFQTDSTSFGFGSGSPSSGAVQSSG. Polar residues predominate over residues 545 to 558; that stretch reads VTNSTPNTGDVNTQ. 2 stretches are compositionally biased toward low complexity: residues 559–590 and 597–625; these read SNTANIATSDNTATSTASNDTGVNTATATTTG and NNNNNNNNNNNNNNNNNNNNNNNNNNTNN. Residues asparagine 577, asparagine 621, asparagine 624, and asparagine 663 are each glycosylated (N-linked (GlcNAc...) asparagine). Residues 665-679 are compositionally biased toward low complexity; the sequence is SSSPSSSSSSSSSSS. N-linked (GlcNAc...) asparagine glycosylation occurs at asparagine 690. Asparagine 690 carries the GPI-anchor amidated asparagine lipid modification. A propeptide spans 691 to 714 (removed in mature form); that stretch reads GSSKLSIGMTFMISGFATMFALFM.

This sequence belongs to the HYR1/IFF family. The GPI-anchor is attached to the protein in the endoplasmic reticulum and serves to target the protein to the cell surface. There, the glucosamine-inositol phospholipid moiety is cleaved off and the GPI-modified mannoprotein is covalently attached via its lipidless GPI glycan remnant to the 1,6-beta-glucan of the outer cell wall layer.

The protein resides in the secreted. It localises to the cell wall. The protein localises to the membrane. Functionally, GPI-anchored cell wall protein involved in cell wall organization, hyphal growth, as well as in host-fungal interaction and virulence. The sequence is that of Cell wall protein IFF7 (IFF8) from Candida albicans (strain SC5314 / ATCC MYA-2876) (Yeast).